The following is a 1309-amino-acid chain: Phospholipase A I (1309 aa).

LRR repeat units lie at residues 155–178, 180–201, 203–223, and 224–248; these read LPLL…IGKL, NLKI…LRQC, GLVE…DFRA, and MAGL…PLHQ. 3 ARM repeats span residues 315-356, 401-439, and 440-481; these read DEGN…SLAR, SVSQ…NLAF, and CLEN…ILGE. One can recognise a PNPLA domain in the interval 502–746; that stretch reads LTMDGGGMKG…VANNPTIFAI (245 aa). The GXGXXG signature appears at 506 to 511; it reads GGGMKG. The GXSXG motif lies at 538 to 542; that stretch reads GTSTG. Ser-540 (nucleophile) is an active-site residue. The active-site Proton acceptor is the Asp-733. A DGA/G motif is present at residues 733 to 735; the sequence is DGA. The segment at 1183–1253 is disordered; that stretch reads VIGPSNEPQE…EDSDHEKTNR (71 aa). Residues 1188–1208 show a composition bias toward polar residues; sequence NEPQETPLITSQGSSEYNIGD. The segment covering 1216–1235 has biased composition (acidic residues); that stretch reads GEEEDEDEEVNEETEREEME.

This sequence belongs to the patatin family.

It localises to the plastid. Its subcellular location is the chloroplast. Functionally, possesses non-specific lipolytic acyl hydrolase (LAH) activity. Catalyzes the hydrolysis of the galactolipids monogalactosyldiacylglycerol (MGDG) and digalactosyldiacylglycerol (DGDG), and less efficiently the phoshpolipids phosphatidylcholine (PC), phosphatidylethanolamine (PE), phosphatidylglycerol (PG), phosphatidylserine (PS) and phosphatidylinositol (PI). Hydrolyzes phospholipids at both the sn-1 and sn-2 positions. Involved in basal jasmonic acid production and promotes resistance to the necrotrophic fungal pathogen Botrytis cinerea. This chain is Phospholipase A I (PLA1), found in Arabidopsis thaliana (Mouse-ear cress).